A 341-amino-acid polypeptide reads, in one-letter code: Methionine import ATP-binding protein MetN 1 (341 aa).

The ABC transporter domain occupies 2-241 (IEFRQVSKTF…PKTTIAQNFV (240 aa)). 38-45 (GYSGAGKS) contributes to the ATP binding site.

Belongs to the ABC transporter superfamily. Methionine importer (TC 3.A.1.24) family. As to quaternary structure, the complex is composed of two ATP-binding proteins (MetN), two transmembrane proteins (MetI) and a solute-binding protein (MetQ).

It is found in the cell membrane. It catalyses the reaction L-methionine(out) + ATP + H2O = L-methionine(in) + ADP + phosphate + H(+). The enzyme catalyses D-methionine(out) + ATP + H2O = D-methionine(in) + ADP + phosphate + H(+). In terms of biological role, part of the ABC transporter complex MetNIQ involved in methionine import. Responsible for energy coupling to the transport system. The protein is Methionine import ATP-binding protein MetN 1 of Staphylococcus aureus (strain USA300).